The sequence spans 481 residues: Threonine synthase (481 aa).

At Lys118 the chain carries N6-(pyridoxal phosphate)lysine.

The protein belongs to the threonine synthase family. Monomer. Requires pyridoxal 5'-phosphate as cofactor.

It carries out the reaction O-phospho-L-homoserine + H2O = L-threonine + phosphate. Its pathway is amino-acid biosynthesis; L-threonine biosynthesis; L-threonine from L-aspartate: step 5/5. Functionally, catalyzes the gamma-elimination of phosphate from L-phosphohomoserine and the beta-addition of water to produce L-threonine. This is Threonine synthase (thrC) from Corynebacterium glutamicum (strain ATCC 13032 / DSM 20300 / JCM 1318 / BCRC 11384 / CCUG 27702 / LMG 3730 / NBRC 12168 / NCIMB 10025 / NRRL B-2784 / 534).